Consider the following 59-residue polypeptide: Large ribosomal subunit protein eL37 (59 aa).

4 residues coordinate Zn(2+): cysteine 20, cysteine 23, cysteine 35, and cysteine 38. The C4-type zinc finger occupies 20–38 (CRRCGRHSFHRRKGYCAAC).

The protein belongs to the eukaryotic ribosomal protein eL37 family. It depends on Zn(2+) as a cofactor.

Functionally, binds to the 23S rRNA. The sequence is that of Large ribosomal subunit protein eL37 (rpl37e) from Archaeoglobus fulgidus (strain ATCC 49558 / DSM 4304 / JCM 9628 / NBRC 100126 / VC-16).